The following is a 145-amino-acid chain: uncharacterized protein (145 aa).

Residues 1-21 traverse the membrane as a helical segment; the sequence is MWFLVKATFWFSLVLVLLPFL. The tract at residues 109–145 is disordered; it reads TPAESVPSAEATEKAEPAFKRMPVPEHRLDPGPASGK. Residues 119–138 show a composition bias toward basic and acidic residues; sequence ATEKAEPAFKRMPVPEHRLD.

The protein resides in the membrane. This is an uncharacterized protein from Rhizobium meliloti (strain 1021) (Ensifer meliloti).